A 427-amino-acid polypeptide reads, in one-letter code: Serine--tRNA ligase (427 aa).

231–233 (TAE) contributes to the L-serine binding site. ATP contacts are provided by residues 262 to 264 (RRE) and V278. E285 lines the L-serine pocket. Position 349–352 (349–352 (EVSS)) interacts with ATP. Position 384 (S384) interacts with L-serine.

This sequence belongs to the class-II aminoacyl-tRNA synthetase family. Type-1 seryl-tRNA synthetase subfamily. As to quaternary structure, homodimer. The tRNA molecule binds across the dimer.

The protein localises to the cytoplasm. It carries out the reaction tRNA(Ser) + L-serine + ATP = L-seryl-tRNA(Ser) + AMP + diphosphate + H(+). The enzyme catalyses tRNA(Sec) + L-serine + ATP = L-seryl-tRNA(Sec) + AMP + diphosphate + H(+). It participates in aminoacyl-tRNA biosynthesis; selenocysteinyl-tRNA(Sec) biosynthesis; L-seryl-tRNA(Sec) from L-serine and tRNA(Sec): step 1/1. Its function is as follows. Catalyzes the attachment of serine to tRNA(Ser). Is also able to aminoacylate tRNA(Sec) with serine, to form the misacylated tRNA L-seryl-tRNA(Sec), which will be further converted into selenocysteinyl-tRNA(Sec). The sequence is that of Serine--tRNA ligase from Chlamydia pneumoniae (Chlamydophila pneumoniae).